The chain runs to 316 residues: Methionyl-tRNA formyltransferase (316 aa).

(6S)-5,6,7,8-tetrahydrofolate is bound at residue 117–120 (SLLP).

This sequence belongs to the Fmt family.

It carries out the reaction L-methionyl-tRNA(fMet) + (6R)-10-formyltetrahydrofolate = N-formyl-L-methionyl-tRNA(fMet) + (6S)-5,6,7,8-tetrahydrofolate + H(+). Its function is as follows. Attaches a formyl group to the free amino group of methionyl-tRNA(fMet). The formyl group appears to play a dual role in the initiator identity of N-formylmethionyl-tRNA by promoting its recognition by IF2 and preventing the misappropriation of this tRNA by the elongation apparatus. The chain is Methionyl-tRNA formyltransferase from Janthinobacterium sp. (strain Marseille) (Minibacterium massiliensis).